A 144-amino-acid chain; its full sequence is Arginine decarboxylase proenzyme (144 aa).

The Schiff-base intermediate with substrate; via pyruvic acid role is filled by S80. S80 carries the pyruvic acid (Ser); by autocatalysis modification. Catalysis depends on H85, which acts as the Proton acceptor; for processing activity. The Proton donor; for catalytic activity role is filled by C100.

The protein belongs to the prokaryotic AdoMetDC family. Type 1 subfamily. In terms of assembly, heterooctamer of four alpha and four beta chains arranged as a tetramer of alpha/beta heterodimers. The cofactor is pyruvate. Post-translationally, is synthesized initially as an inactive proenzyme. Formation of the active enzyme involves a self-maturation process in which the active site pyruvoyl group is generated from an internal serine residue via an autocatalytic post-translational modification. Two non-identical subunits are generated from the proenzyme in this reaction, and the pyruvate is formed at the N-terminus of the alpha chain, which is derived from the carboxyl end of the proenzyme. The post-translation cleavage follows an unusual pathway, termed non-hydrolytic serinolysis, in which the side chain hydroxyl group of the serine supplies its oxygen atom to form the C-terminus of the beta chain, while the remainder of the serine residue undergoes an oxidative deamination to produce ammonia and the pyruvoyl group blocking the N-terminus of the alpha chain.

It catalyses the reaction L-arginine + H(+) = agmatine + CO2. It functions in the pathway amine and polyamine biosynthesis; agmatine biosynthesis; agmatine from L-arginine: step 1/1. In terms of biological role, specifically catalyzes the decarboxylation of L-arginine to agmatine. Has no S-adenosylmethionine decarboxylase (AdoMetDC) activity. The protein is Arginine decarboxylase proenzyme of Ignicoccus hospitalis (strain KIN4/I / DSM 18386 / JCM 14125).